Here is a 363-residue protein sequence, read N- to C-terminus: L-arabinitol 4-dehydrogenase (363 aa).

Zn(2+) is bound by residues Cys-53, His-78, Glu-79, Cys-108, Cys-111, Cys-114, Cys-122, and Glu-163. NAD(+) is bound by residues 190–191, Asp-211, Arg-216, Ile-282, and 306–308; these read PI and QYR.

The protein belongs to the zinc-containing alcohol dehydrogenase family. Homotetramer. It depends on Zn(2+) as a cofactor.

The catalysed reaction is L-arabinitol + NAD(+) = L-xylulose + NADH + H(+). It participates in carbohydrate degradation; L-arabinose degradation via L-arabinitol; D-xylulose 5-phosphate from L-arabinose (fungal route): step 2/5. In terms of biological role, catalyzes the NAD-dependent oxidation of L-arabinitol to L-xylulose in the fungal L-arabinose catabolic pathway. L-arabinose catabolism is important for using plant material as a carbon source. Not active on D-arabinitol, D-sorbitol and D-mannitol. This Neurospora crassa (strain ATCC 24698 / 74-OR23-1A / CBS 708.71 / DSM 1257 / FGSC 987) protein is L-arabinitol 4-dehydrogenase (ard-1).